The chain runs to 153 residues: 3-hydroxyacyl-[acyl-carrier-protein] dehydratase FabZ (153 aa).

Residue His-57 is part of the active site.

Belongs to the thioester dehydratase family. FabZ subfamily.

Its subcellular location is the cytoplasm. It catalyses the reaction a (3R)-hydroxyacyl-[ACP] = a (2E)-enoyl-[ACP] + H2O. Its function is as follows. Involved in unsaturated fatty acids biosynthesis. Catalyzes the dehydration of short chain beta-hydroxyacyl-ACPs and long chain saturated and unsaturated beta-hydroxyacyl-ACPs. The polypeptide is 3-hydroxyacyl-[acyl-carrier-protein] dehydratase FabZ (Aeromonas salmonicida (strain A449)).